A 685-amino-acid chain; its full sequence is Putative alpha-1,3-mannosyltransferase MNN14 (685 aa).

Topologically, residues Met-1–Lys-13 are cytoplasmic. Residues Leu-14 to Ser-34 traverse the membrane as a helical segment. The Lumenal segment spans residues Gln-35 to Leu-685. Asn-199, Asn-338, Asn-408, and Asn-556 each carry an N-linked (GlcNAc...) asparagine glycan.

This sequence belongs to the MNN1/MNT family.

The protein resides in the golgi apparatus membrane. It participates in protein modification; protein glycosylation. Functionally, responsible for addition of the terminal mannose residues to the outer chain of core N-linked polysaccharides and to O-linked mannotriose. Implicated in late Golgi modifications. Involved in virulence. In Candida albicans (strain SC5314 / ATCC MYA-2876) (Yeast), this protein is Putative alpha-1,3-mannosyltransferase MNN14 (MNN14).